The following is a 452-amino-acid chain: Maltoporin (452 aa).

An N-terminal signal peptide occupies residues 1–25; the sequence is MMITLRKLPLAVAVAAGVMSAQAMA.

This sequence belongs to the porin LamB (TC 1.B.3) family. In terms of assembly, homotrimer formed of three 18-stranded antiparallel beta-barrels, containing three independent channels.

The protein resides in the cell outer membrane. The catalysed reaction is beta-maltose(in) = beta-maltose(out). Its function is as follows. Involved in the transport of maltose and maltodextrins. The protein is Maltoporin of Salmonella enteritidis PT4 (strain P125109).